The chain runs to 372 residues: Dof zinc finger protein DOF5.6 (372 aa).

A Dof-type zinc finger spans residues 73-127; sequence QKCPRCESTHTKFCYYNNYSLSQPRYFCKTCRRYWTKGGTLRNIPVGGGCRKNKK. The Zn(2+) site is built by Cys-75, Cys-78, Cys-100, and Cys-103. The segment at 117-146 is disordered; sequence PVGGGCRKNKKPSSSNSSSSTSSGKKPSNI. Residues 128–145 are compositionally biased toward low complexity; the sequence is PSSSNSSSSTSSGKKPSN.

The PEAR proteins (e.g. DOF2.4, DOF5.1, DOF3.2, DOF1.1, DOF5.6 and DOF5.3) form a short-range concentration gradient that peaks at protophloem sieve elements (PSE). Preferentially expressed in the vasculature of all organs, including seedlings, roots, stems, buds, leaves, flowers and siliques, and particularly in the cambium, phloem and interfascicular parenchyma cells of inflorescence stems.

Its subcellular location is the nucleus. Its function is as follows. Transcription factor that binds specifically to a 5'-AA[AG]G-3' consensus core sequence. Promotes expression. The PEAR proteins (e.g. DOF2.4, DOF5.1, DOF3.2, DOF1.1, DOF5.6 and DOF5.3) activate gene expression that promotes radial growth of protophloem sieve elements. Involved in the regulation of interfascicular cambium formation and vascular tissue development, particularly at a very early stage during inflorescence stem development; promotes both cambium activity and phloem specification, but prevents xylem specification. The chain is Dof zinc finger protein DOF5.6 from Arabidopsis thaliana (Mouse-ear cress).